The sequence spans 303 residues: Diacylglycerol kinase (303 aa).

Positions 1–132 (MKRARIIYNP…IDIGQVNGQY (132 aa)) constitute a DAGKc domain. ATP is bound by residues 9 to 13 (NPTSG), Thr40, 66 to 72 (GDGTINE), and Thr93. Mg(2+) is bound by residues Ser213, Asp216, and Met218. Glu273 serves as the catalytic Proton acceptor.

The protein belongs to the diacylglycerol/lipid kinase family. The cofactor is Mg(2+).

It catalyses the reaction a 1,2-diacyl-sn-glycerol + ATP = a 1,2-diacyl-sn-glycero-3-phosphate + ADP + H(+). The enzyme catalyses 1,2-di-(9Z-octadecenoyl)-sn-glycerol + ATP = 1,2-di-(9Z-octadecenoyl)-sn-glycero-3-phosphate + ADP + H(+). Its function is as follows. Catalyzes the phosphorylation of diacylglycerol (DAG) into phosphatidic acid. Is a key enzyme involved in the production of lipoteichoic acid by reintroducing DAG formed from the breakdown of membrane phospholipids into the phosphatidylglycerol biosynthetic pathway. Is more active toward long-chain DAG compared with short-chain DAG. Is not able to phosphorylate substrates other than DAG, such as monoacylglycerol, ceramide, undecaprenol, phosphatidylinositol, or sphingosine. The protein is Diacylglycerol kinase (dagK) of Bacillus subtilis (strain 168).